The chain runs to 258 residues: MAVAVRVIPCLDVDAGRVVKGVNFEGLRDAGDPVELAHRYDNAGADELTFLDVTASSGNRETTFDVVRRTAEEVFIPLCVGGGVRGVAEVDKLLRFGADKAAINTAAVARPDVIDEITRHFGSQVLVLSVDARRTRPGSKPTPSGFEVTTHGGRTGTGIDAIEWAKEAADRGVGEILLNSIDADGTKDGFDLEMIRMVRAAVKVPLIASGGAGEPAHFPPAVAAGADAVLAASIFHWGPNDMMHQVKDAIRNAGFEVR.

Active-site residues include Asp-12 and Asp-131.

This sequence belongs to the HisA/HisF family. As to quaternary structure, heterodimer of HisH and HisF.

The protein localises to the cytoplasm. The enzyme catalyses 5-[(5-phospho-1-deoxy-D-ribulos-1-ylimino)methylamino]-1-(5-phospho-beta-D-ribosyl)imidazole-4-carboxamide + L-glutamine = D-erythro-1-(imidazol-4-yl)glycerol 3-phosphate + 5-amino-1-(5-phospho-beta-D-ribosyl)imidazole-4-carboxamide + L-glutamate + H(+). Its pathway is amino-acid biosynthesis; L-histidine biosynthesis; L-histidine from 5-phospho-alpha-D-ribose 1-diphosphate: step 5/9. Its function is as follows. IGPS catalyzes the conversion of PRFAR and glutamine to IGP, AICAR and glutamate. The HisF subunit catalyzes the cyclization activity that produces IGP and AICAR from PRFAR using the ammonia provided by the HisH subunit. This Pseudarthrobacter chlorophenolicus (strain ATCC 700700 / DSM 12829 / CIP 107037 / JCM 12360 / KCTC 9906 / NCIMB 13794 / A6) (Arthrobacter chlorophenolicus) protein is Imidazole glycerol phosphate synthase subunit HisF.